The following is a 492-amino-acid chain: Putative heme-binding protein VNG_2021C (492 aa).

His-177 serves as a coordination point for heme. A disordered region spans residues 253 to 301 (AGERVPAPEGGADAHGEGERTHHHGDSDHHDGDDGEQHHHSTGDEADDG). Positions 264–301 (ADAHGEGERTHHHGDSDHHDGDDGEQHHHSTGDEADDG) are enriched in basic and acidic residues. The ABM domain occupies 402-490 (GTMGMFYETK…VLADRPRHVF (89 aa)).

In the N-terminal section; belongs to the ChdC family.

The chain is Putative heme-binding protein VNG_2021C from Halobacterium salinarum (strain ATCC 700922 / JCM 11081 / NRC-1) (Halobacterium halobium).